A 169-amino-acid chain; its full sequence is Lipoprotein signal peptidase (169 aa).

Residues 1-9 are Cytoplasmic-facing; the sequence is MPDVDRFGR. Residues 10–30 traverse the membrane as a helical segment; sequence LPWLWITVLVFVLDQVSKAFF. At 31–67 the chain is on the periplasmic side; sequence QAELSMYQQIVVIPDLFSWTLAYNTGAAFSFLADSSG. The chain crosses the membrane as a helical span at residues 68 to 89; it reads WQRWLFALIAIVVSASLVVWLK. Residues 90–96 lie on the Cytoplasmic side of the membrane; that stretch reads RLKKGET. A helical membrane pass occupies residues 97-118; sequence WLAIALALVLGGALGNLYDRMV. The Periplasmic portion of the chain corresponds to 119–140; it reads LGHVVDFILVHWQNRWYFPAFN. Catalysis depends on residues Asp124 and Asp143. The chain crosses the membrane as a helical span at residues 141-154; that stretch reads LADSAITVGAVMLA. At 155–169 the chain is on the cytoplasmic side; it reads LDMFRSKKSGEAAHG.

This sequence belongs to the peptidase A8 family. As to quaternary structure, monomer in the crystal.

It is found in the cell inner membrane. The catalysed reaction is Release of signal peptides from bacterial membrane prolipoproteins. Hydrolyzes -Xaa-Yaa-Zaa-|-(S,diacylglyceryl)Cys-, in which Xaa is hydrophobic (preferably Leu), and Yaa (Ala or Ser) and Zaa (Gly or Ala) have small, neutral side chains.. It participates in protein modification; lipoprotein biosynthesis (signal peptide cleavage). Inhibited by globomycin. In terms of biological role, this protein specifically catalyzes the removal of signal peptides from prolipoproteins. This chain is Lipoprotein signal peptidase, found in Pseudomonas aeruginosa (strain ATCC 15692 / DSM 22644 / CIP 104116 / JCM 14847 / LMG 12228 / 1C / PRS 101 / PAO1).